A 538-amino-acid chain; its full sequence is MAARRVSSLLSRSFSASSPLLFRSQGRNCYNGGILRRFGTSSAAAEEIINPSVQVSHTQLLINGNFVDSASGKTFPTLDPRTGEVIAHVAEGDAEDINRAVKAARTAFDEGPWPKMSAYERSRVLLRFADLVEKHSEELASLETWDNGKPYQQSLTAEIPMFARLFRYYAGWADKIHGLTIPADGNYQVHTLHEPIGVAGQIIPWNFPLLMFAWKVGPALACGNTIVLKTAEQTPLTAFYAGKLFLEAGLPPGVLNIVSGFGATAGAALASHMDVDKLAFTGSTDTGKVILGLAANSNLKPVTLELGGKSPFIVFEDADIDKAVELAHFALFFNQGQCCCAGSRTFVHEKVYDEFVEKSKARALKRVVGDPFRKGIEQGPQIDLKQFEKVMKYIKSGIESNATLECGGDQIGDKGYFIQPTVFSNVKDDMLIAQDEIFGPVQSILKFSDVDEVIKRANETKYGLAAGVFTKNLDTANRVSRALKAGTVWVNCFDVFDAAIPFGGYKMSGNGREKGIYSLNNYLQIKAVVTALNKPAWI.

The transit peptide at 1-38 (MAARRVSSLLSRSFSASSPLLFRSQGRNCYNGGILRRF) directs the protein to the mitochondrion. Position 282-287 (282-287 (GSTDTG)) interacts with NAD(+). Glu305 (proton acceptor) is an active-site residue. Residue Cys339 is the Nucleophile of the active site.

The protein belongs to the aldehyde dehydrogenase family. Homotetramer.

The protein resides in the mitochondrion matrix. It catalyses the reaction an aldehyde + NAD(+) + H2O = a carboxylate + NADH + 2 H(+). Its function is as follows. Possesses activity on acetaldehyde and glycolaldehyde in vitro. In Arabidopsis thaliana (Mouse-ear cress), this protein is Aldehyde dehydrogenase family 2 member B4, mitochondrial (ALDH2B4).